The following is a 771-amino-acid chain: MSGFLASLDPRRVQWGAAWYAMHSRILRTKPVESMLEGTGTTSAHGTKLAQVLTTVDLISLGVGSCVGTGMYVVSGLVAKEMAGPGVIVSFIIAAVASILSGVCYAEFGVRVPKTTGSAYTYSYVTVGEFVAFFIGWNLILEYLIGTAAGASALSSMFDSLANHSISRWMVDTVGTLNGLGKGEESYPDLLALVIAVIVTIIVALGVKNSVGFNNVLNVLNLAVWVFIMIAGLFFINGKYWAEGQFLPHGWSGVLQGAATCFYAFIGFDIIATTGEEAKNPNTSIPYAITASLVICLTAYVSVSMILTLMVPYYAIDTESPLMEMFVAHGFYAAKFVVAIGSVAGLTVSLLGSLFPMPRVIYAMAGDGLLFRFLAHVSSYTETPVVACIVSGFLAALLSLLVSLRDLIEMMSIGTLLAYTLVSVCVLLLRYQPESDIDGFVKFLSEEHTKKKEGILADCEKETCSPVSEGEEFSSPATNTCGAKNLPSLGDNEMLIGKSDKSAYNVNHPNYGTVDMTTGIEADESENIYLIKLKKLIGPRYYTMRIRLGLPGKMDRPTAATGHTVTICVLLLFILMFIFCSFIIFGSEYISGQSWWAILLVVLMMLLISVLVFVILQQPENPKKLPYMAPCLPFVPAFAMLVNIYLMLKLSTITWIRFAVWCFVGMLIYFGYGIWNSTLEISAREQALHQSTYQRYDVDDPFSVEEGFSYATEGESQEDWGGPAEDKGFYYQQMSDAKANSRTSSKAKSKSKHKQNSEALIANDELDCSPE.

Transmembrane regions (helical) follow at residues Leu58–Val78, Ala83–Val103, Ala119–Leu141, Tyr187–Val207, Val216–Ile236, and Trp251–Ile271. N-linked (GlcNAc...) asparagine glycosylation is present at Asn282. A run of 4 helical transmembrane segments spans residues Ala291–Val311, Phe336–Pro356, Pro384–Leu404, and Leu407–Leu427. Phosphoserine occurs at positions 465, 468, 475, and 488. The next 4 helical transmembrane spans lie at Val565–Phe585, Trp596–Leu616, Met628–Leu648, and Trp655–Trp675. Asn676 is a glycosylation site (N-linked (GlcNAc...) asparagine). The disordered stretch occupies residues Ser735 to Glu771. The segment covering Ser745–Lys754 has biased composition (basic residues). Phosphoserine occurs at positions 757 and 769.

The protein belongs to the amino acid-polyamine-organocation (APC) superfamily. As to expression, expressed in retina, brain and spinal cord. In the retina, expressed in the inner nuclear layer and photoreceptor layer (at protein level). Expressed in liver, spleen, lung, kidney intestine and brain (at protein level).

It is found in the lysosome membrane. It carries out the reaction 4-aminobutanoate(in) = 4-aminobutanoate(out). Functionally, imports 4-aminobutanoate (GABA) into lysosomes. May act as a GABA sensor that regulates mTORC2-dependent INS signaling and gluconeogenesis. The transport mechanism and substrate selectivity remain to be elucidated. This chain is Solute carrier family 7 member 14, found in Mus musculus (Mouse).